Consider the following 263-residue polypeptide: Small ribosomal subunit protein eS1 (263 aa).

A compositionally biased stretch (basic and acidic residues) spans 236–254 (GDGKGGSDEPGARVDRPEG). Residues 236–263 (GDGKGGSDEPGARVDRPEGYEPPVQETV) form a disordered region.

This sequence belongs to the eukaryotic ribosomal protein eS1 family. As to quaternary structure, component of the small ribosomal subunit. Mature ribosomes consist of a small (40S) and a large (60S) subunit. The 40S subunit contains about 33 different proteins and 1 molecule of RNA (18S). The 60S subunit contains about 49 different proteins and 3 molecules of RNA (28S, 5.8S and 5S).

It is found in the cytoplasm. This Periplaneta americana (American cockroach) protein is Small ribosomal subunit protein eS1.